The chain runs to 1059 residues: Transmembrane protease serine 9 (1059 aa).

At 1-29 the chain is on the cytoplasmic side; the sequence is MEPTVADVHLVPRTTKEVPALDAACCRAA. A helical; Signal-anchor for type II membrane protein membrane pass occupies residues 30-50; sequence SIGVVATSLVVLTLGVLLAFL. Residues 51–1059 lie on the Extracellular side of the membrane; it reads STQGFHVDHT…RGWIGQHIQE (1009 aa). An LDL-receptor class A domain is found at 153 to 190; that stretch reads RCPGNSFSCGNSQCVTKVNPECDDQEDCSDGSDEAHCE. Intrachain disulfides connect cysteine 154–cysteine 166, cysteine 161–cysteine 180, cysteine 174–cysteine 189, and cysteine 228–cysteine 244. Positions 203-436 constitute a Peptidase S1 1 domain; sequence IVGGMEASPG…LRDWILEATT (234 aa). Catalysis depends on charge relay system residues histidine 243 and aspartate 292. 3 cysteine pairs are disulfide-bonded: cysteine 326–cysteine 393, cysteine 358–cysteine 372, and cysteine 383–cysteine 412. Serine 387 functions as the Charge relay system in the catalytic mechanism. Residues 443 to 469 are disordered; the sequence is APTMAPAPAAPSTAWPTSPESPVVSTP. The region spanning 504–736 is the Peptidase S1 2 domain; sequence VVGGFGAASG…LKGWILEIMS (233 aa). Residues cysteine 529 and cysteine 545 are joined by a disulfide bond. The Charge relay system role is filled by histidine 544. N-linked (GlcNAc...) asparagine glycosylation is present at asparagine 547. Residue aspartate 592 is the Charge relay system of the active site. 3 disulfide bridges follow: cysteine 626/cysteine 693, cysteine 658/cysteine 672, and cysteine 683/cysteine 712. 2 N-linked (GlcNAc...) asparagine glycosylation sites follow: asparagine 638 and asparagine 663. Serine 687 serves as the catalytic Charge relay system. The segment at 758-814 is disordered; it reads TTAGLTVPGATPSRPTPGAASRVTGQPANSTLSAVSTTARGQTPFPDAPEATTHTQL. Residues 780-798 are compositionally biased toward polar residues; it reads VTGQPANSTLSAVSTTARG. N-linked (GlcNAc...) asparagine glycosylation occurs at asparagine 786. A Peptidase S1 3 domain is found at 827–1058; that stretch reads IVGGSAAGRG…VRGWIGQHIQ (232 aa). Cystine bridges form between cysteine 853–cysteine 869, cysteine 949–cysteine 1015, cysteine 980–cysteine 994, and cysteine 1005–cysteine 1034.

This sequence belongs to the peptidase S1 family. In terms of processing, proteolytically cleaved to generate 3 independent serine protease chains. The cleaved chains may remain attached to the membrane thanks to disulfide bonds. It is unclear whether cleavage always takes place. In terms of tissue distribution, expressed in fetal human tissues, such as kidney, liver, lung and brain, and in a variety of tumor cell lines. Weakly expressed in adult tissues including skeletal muscle, liver, placenta and heart.

The protein localises to the cell membrane. Its activity is regulated as follows. Inhibited by serine protease inhibitors PMSF and 4-(2-aminoethyl)benzenesulfonyl fluoride, but not by EDTA. Serase-1 and serase-2 are serine proteases that hydrolyze the peptides N-t-Boc-Gln-Ala-Arg-AMC and N-t-Boc-Gln-Gly-Arg-AMC. In contrast, N-t-Boc-Ala-Phe-Lys-AMC and N-t-Boc-Ala-Pro-Ala-AMC are not significantly hydrolyzed. The chain is Transmembrane protease serine 9 (TMPRSS9) from Homo sapiens (Human).